Consider the following 507-residue polypeptide: BPI fold-containing family C protein (507 aa).

The N-terminal stretch at 1–23 (MCTKTIPVLWGCFLLWNLYVSSS) is a signal peptide. N-linked (GlcNAc...) asparagine glycans are attached at residues asparagine 79, asparagine 92, and asparagine 113. An intrachain disulfide couples cysteine 161 to cysteine 200. N-linked (GlcNAc...) asparagine glycans are attached at residues asparagine 213, asparagine 225, asparagine 257, asparagine 301, asparagine 355, asparagine 372, and asparagine 415.

It belongs to the BPI/LBP/Plunc superfamily. BPI/LBP family. Detected in the basal layer of the epidermis from inflammatory skin from psoriasis patients, but not in normal skin.

Its subcellular location is the secreted. This chain is BPI fold-containing family C protein (BPIFC), found in Homo sapiens (Human).